The sequence spans 328 residues: C-type lectin domain family 4 member K (328 aa).

Residues 1 to 43 (MTVEKEAPDAHFTVDKQNISLWPREPPPKSGPSLVPGKTPTVR) are Cytoplasmic-facing. The chain crosses the membrane as a helical; Signal-anchor for type II membrane protein span at residues 44 to 64 (AALICLTLVLVASVLLQAVLY). Topologically, residues 65–328 (PRFMGTISDV…CKRPYVPSEP (264 aa)) are extracellular. Asparagine 87, asparagine 113, and asparagine 180 each carry an N-linked (GlcNAc...) asparagine glycan. Positions 145-190 (EEVSTLNAQIPELKSDLEKASALNTKIRALQGSLENMSKLLKRQND) form a coiled coil. Residues 202–320 (FKGNFYYFSL…CDKTFLFICK (119 aa)) form the C-type lectin domain. 2 disulfides stabilise this stretch: cysteine 223–cysteine 319 and cysteine 295–cysteine 311.

As to quaternary structure, homotrimer. As to expression, exclusively expressed by Langerhans cells. Expressed in astrocytoma and malignant ependymoma, but not in normal brain tissues.

It is found in the membrane. Its function is as follows. Calcium-dependent lectin displaying mannose-binding specificity. Induces the formation of Birbeck granules (BGs); is a potent regulator of membrane superimposition and zippering. Binds to sulfated as well as mannosylated glycans, keratan sulfate (KS) and beta-glucans. Facilitates uptake of antigens and is involved in the routing and/or processing of antigen for presentation to T cells. Major receptor on primary Langerhans cells for Candida species, Saccharomyces species, and Malassezia furfur. Protects against human immunodeficiency virus-1 (HIV-1) infection. Binds to high-mannose structures present on the envelope glycoprotein which is followed by subsequent targeting of the virus to the Birbeck granules leading to its rapid degradation. This chain is C-type lectin domain family 4 member K (CD207), found in Homo sapiens (Human).